An 889-amino-acid chain; its full sequence is Cytoplasmic aconitate hydratase (889 aa).

Substrate-binding positions include Gln-86 and 205-207; that span reads DSH. Residues Cys-437, Cys-503, and Cys-506 each contribute to the [4Fe-4S] cluster site. Residues Arg-536, Arg-541, Arg-699, and 779-780 contribute to the substrate site; that span reads SR.

It belongs to the aconitase/IPM isomerase family. In terms of assembly, interacts (when associated with the 4Fe-4S) with FBXL5. Interacts with frataxin(81-210). [4Fe-4S] cluster serves as cofactor.

The protein localises to the cytoplasm. It is found in the cytosol. It carries out the reaction citrate = D-threo-isocitrate. In terms of biological role, bifunctional iron sensor that switches between 2 activities depending on iron availability. Iron deprivation, promotes its mRNA binding activity through which it regulates the expression of genes involved in iron uptake, sequestration and utilization. Binds to iron-responsive elements (IRES) in the untranslated region of target mRNAs preventing for instance the translation of ferritin and aminolevulinic acid synthase and stabilizing the transferrin receptor mRNA. Conversely, when cellular iron levels are high, binds a 4Fe-4S cluster which precludes RNA binding activity and promotes the aconitase activity, the isomerization of citrate to isocitrate via cis-aconitate. This chain is Cytoplasmic aconitate hydratase (Aco1), found in Mus musculus (Mouse).